Reading from the N-terminus, the 163-residue chain is NADH-quinone oxidoreductase subunit I (163 aa).

2 4Fe-4S ferredoxin-type domains span residues 54–84 (LRRY…IDSA) and 94–123 (TRYD…ETHI). The [4Fe-4S] cluster site is built by cysteine 64, cysteine 67, cysteine 70, cysteine 74, cysteine 103, cysteine 106, cysteine 109, and cysteine 113.

Belongs to the complex I 23 kDa subunit family. NDH-1 is composed of 14 different subunits. Subunits NuoA, H, J, K, L, M, N constitute the membrane sector of the complex. [4Fe-4S] cluster is required as a cofactor.

It is found in the cell inner membrane. It carries out the reaction a quinone + NADH + 5 H(+)(in) = a quinol + NAD(+) + 4 H(+)(out). In terms of biological role, NDH-1 shuttles electrons from NADH, via FMN and iron-sulfur (Fe-S) centers, to quinones in the respiratory chain. The immediate electron acceptor for the enzyme in this species is believed to be ubiquinone. Couples the redox reaction to proton translocation (for every two electrons transferred, four hydrogen ions are translocated across the cytoplasmic membrane), and thus conserves the redox energy in a proton gradient. The chain is NADH-quinone oxidoreductase subunit I from Xanthomonas campestris pv. campestris (strain 8004).